The primary structure comprises 202 residues: N-(5'-phosphoribosyl)anthranilate isomerase (202 aa).

Belongs to the TrpF family.

The catalysed reaction is N-(5-phospho-beta-D-ribosyl)anthranilate = 1-(2-carboxyphenylamino)-1-deoxy-D-ribulose 5-phosphate. It functions in the pathway amino-acid biosynthesis; L-tryptophan biosynthesis; L-tryptophan from chorismate: step 3/5. This is N-(5'-phosphoribosyl)anthranilate isomerase from Listeria monocytogenes serovar 1/2a (strain ATCC BAA-679 / EGD-e).